Here is a 152-residue protein sequence, read N- to C-terminus: Large ribosomal subunit protein bL9 (152 aa).

Belongs to the bacterial ribosomal protein bL9 family.

Functionally, binds to the 23S rRNA. The protein is Large ribosomal subunit protein bL9 of Pelagibacter ubique (strain HTCC1062).